The sequence spans 215 residues: Thiamine-phosphate synthase (215 aa).

Residues 43–47 (QFRDK) and Asn-78 each bind 4-amino-2-methyl-5-(diphosphooxymethyl)pyrimidine. 2 residues coordinate Mg(2+): Asp-79 and Asp-98. A 4-amino-2-methyl-5-(diphosphooxymethyl)pyrimidine-binding site is contributed by Ser-117. 143–145 (TNS) provides a ligand contact to 2-[(2R,5Z)-2-carboxy-4-methylthiazol-5(2H)-ylidene]ethyl phosphate. Lys-146 contacts 4-amino-2-methyl-5-(diphosphooxymethyl)pyrimidine. 2-[(2R,5Z)-2-carboxy-4-methylthiazol-5(2H)-ylidene]ethyl phosphate-binding positions include Gly-174 and 194-195 (IS).

This sequence belongs to the thiamine-phosphate synthase family. It depends on Mg(2+) as a cofactor.

The catalysed reaction is 2-[(2R,5Z)-2-carboxy-4-methylthiazol-5(2H)-ylidene]ethyl phosphate + 4-amino-2-methyl-5-(diphosphooxymethyl)pyrimidine + 2 H(+) = thiamine phosphate + CO2 + diphosphate. The enzyme catalyses 2-(2-carboxy-4-methylthiazol-5-yl)ethyl phosphate + 4-amino-2-methyl-5-(diphosphooxymethyl)pyrimidine + 2 H(+) = thiamine phosphate + CO2 + diphosphate. It catalyses the reaction 4-methyl-5-(2-phosphooxyethyl)-thiazole + 4-amino-2-methyl-5-(diphosphooxymethyl)pyrimidine + H(+) = thiamine phosphate + diphosphate. The protein operates within cofactor biosynthesis; thiamine diphosphate biosynthesis; thiamine phosphate from 4-amino-2-methyl-5-diphosphomethylpyrimidine and 4-methyl-5-(2-phosphoethyl)-thiazole: step 1/1. Condenses 4-methyl-5-(beta-hydroxyethyl)thiazole monophosphate (THZ-P) and 2-methyl-4-amino-5-hydroxymethyl pyrimidine pyrophosphate (HMP-PP) to form thiamine monophosphate (TMP). This chain is Thiamine-phosphate synthase, found in Lactococcus lactis subsp. lactis (strain IL1403) (Streptococcus lactis).